The sequence spans 431 residues: Gamma-glutamyl phosphate reductase (431 aa).

The protein belongs to the gamma-glutamyl phosphate reductase family.

Its subcellular location is the cytoplasm. It catalyses the reaction L-glutamate 5-semialdehyde + phosphate + NADP(+) = L-glutamyl 5-phosphate + NADPH + H(+). It functions in the pathway amino-acid biosynthesis; L-proline biosynthesis; L-glutamate 5-semialdehyde from L-glutamate: step 2/2. Catalyzes the NADPH-dependent reduction of L-glutamate 5-phosphate into L-glutamate 5-semialdehyde and phosphate. The product spontaneously undergoes cyclization to form 1-pyrroline-5-carboxylate. The polypeptide is Gamma-glutamyl phosphate reductase (Acetivibrio thermocellus (strain ATCC 27405 / DSM 1237 / JCM 9322 / NBRC 103400 / NCIMB 10682 / NRRL B-4536 / VPI 7372) (Clostridium thermocellum)).